Here is a 370-residue protein sequence, read N- to C-terminus: MTKEEIKRLVDEVKTDVIAWRRHLHAHPELSFQEEKTAQFVYETLQSFGHLELSRPTKTSVMARLIGQQPGRVVAIRADMDALPIQEENTFEFASKNPGVMHACGHDGHTAMLLGTAKIFSQLRDDIRGEIRFLFQHAEELFPGGAEEMVQAGVMDGVDVVIGTHLWSPLERGKIGIVYGPMMAAPDRFFIRIIGKGGHGAMPHQTIDAIAIGAQVVTNLQHIVSRYVDPLEPLVLSVTQFVAGTAHNVLPGEVEIQGTVRTFDETLRRTVPQWMERIVKGITEAHGASYEFRFDYGYRPVINYDEGDPRHGGNGVRAVRRRGSGPLETEHGRRRFLRLFAKSARQLFLRRRGQCRKRHRLPAPPPALYD.

Belongs to the peptidase M20 family. Homotetramer. The cofactor is Co(2+).

It catalyses the reaction an N-acyl-L-amino acid + H2O = an L-alpha-amino acid + a carboxylate. The enzyme catalyses an N-acetyl-L-cysteine-S-conjugate + H2O = an S-substituted L-cysteine + acetate. Its function is as follows. Hydrolyzes most efficiently N-acetyl derivatives of aromatic amino acids but is also active on other amino acids. L-stereospecific. The sequence is that of N-acyl-L-amino acid amidohydrolase (amaA) from Geobacillus stearothermophilus (Bacillus stearothermophilus).